The following is a 275-amino-acid chain: Chemotaxis protein methyltransferase 1 (275 aa).

In terms of domain architecture, CheR-type methyltransferase spans 1-275 (MTAITISDQE…CNPGIIYKLK (275 aa)). Residues Asn-76, Thr-78, Arg-82, Glu-117, Asp-145, 201–202 (NL), and 218–219 (RN) contribute to the S-adenosyl-L-methionine site.

It carries out the reaction L-glutamyl-[protein] + S-adenosyl-L-methionine = [protein]-L-glutamate 5-O-methyl ester + S-adenosyl-L-homocysteine. In terms of biological role, methylation of the membrane-bound methyl-accepting chemotaxis proteins (MCP) to form gamma-glutamyl methyl ester residues in MCP. This is Chemotaxis protein methyltransferase 1 (cheR1) from Vibrio cholerae serotype O1 (strain ATCC 39315 / El Tor Inaba N16961).